The sequence spans 204 residues: Large ribosomal subunit protein uL4 (204 aa).

Residues 49-72 (QKNRAAVSGGGKKPWRQKGTGRAR) are disordered.

It belongs to the universal ribosomal protein uL4 family. Part of the 50S ribosomal subunit.

Functionally, one of the primary rRNA binding proteins, this protein initially binds near the 5'-end of the 23S rRNA. It is important during the early stages of 50S assembly. It makes multiple contacts with different domains of the 23S rRNA in the assembled 50S subunit and ribosome. Forms part of the polypeptide exit tunnel. The polypeptide is Large ribosomal subunit protein uL4 (Saccharophagus degradans (strain 2-40 / ATCC 43961 / DSM 17024)).